We begin with the raw amino-acid sequence, 110 residues long: Mitochondrial pyruvate carrier 1 (110 aa).

2 helical membrane passes run 20 to 36 (HFWG…AGLV) and 44 to 61 (MISG…ALFM).

It belongs to the mitochondrial pyruvate carrier (MPC) (TC 2.A.105) family.

Its subcellular location is the mitochondrion inner membrane. In terms of biological role, mediates the uptake of pyruvate into mitochondria. This is Mitochondrial pyruvate carrier 1 from Arabidopsis thaliana (Mouse-ear cress).